The chain runs to 1758 residues: Collagen alpha-2(IV) chain (1758 aa).

Positions M1–S26 are cleaved as a signal peptide. Residues Q27–G42 form a 7S domain region. The segment at G42 to A1527 is triple-helical region. The segment covering M47–R62 has biased composition (low complexity). 4 disordered regions span residues M47–G943, G955–G1304, G1316–P1339, and G1367–G1525. A compositionally biased stretch (gly residues) spans G102–G111. Pro residues predominate over residues P134–P149. Positions Y189–D198 are enriched in basic and acidic residues. Residues P224 to V234 show a composition bias toward low complexity. An O-linked (Xyl...) (glycosaminoglycan) serine glycan is attached at S248. Basic and acidic residues predominate over residues P258–P267. The span at G268–G283 shows a compositional bias: gly residues. A compositionally biased stretch (pro residues) spans P367 to P382. A compositionally biased stretch (gly residues) spans G398–G407. Low complexity-rich tracts occupy residues Y408–P417 and A429–P439. Positions K464 to E479 are enriched in basic and acidic residues. Composition is skewed to low complexity over residues G495–N509 and P568–P584. Residues P638 to P648 show a composition bias toward pro residues. 3 stretches are compositionally biased toward gly residues: residues G693–G702, G737–G746, and G782–G791. Over residues L839 to P858 the composition is skewed to low complexity. Residues G859–G868 are compositionally biased toward gly residues. The segment covering A929–L938 has biased composition (low complexity). Residues G958–G967 show a composition bias toward gly residues. Residues L968–V980 are compositionally biased toward low complexity. Gly residues predominate over residues G988–G997. The span at L1040–P1056 shows a compositional bias: low complexity. The span at G1194–G1203 shows a compositional bias: gly residues. Positions F1237–S1250 are enriched in low complexity. Residues G1251–G1260 are compositionally biased toward gly residues. The span at G1373–G1382 shows a compositional bias: gly residues. 2 stretches are compositionally biased toward low complexity: residues L1413–P1425 and G1433–L1454. Gly residues-rich tracts occupy residues G1492–G1501 and G1507–G1516. Residues G1531–T1754 enclose the Collagen IV NC1 domain. Intrachain disulfides connect C1546–C1635, C1579–C1632, C1591–C1597, C1654–C1750, C1688–C1747, and C1700–C1707.

The protein belongs to the type IV collagen family. As to quaternary structure, trimers of two alpha 1(IV) and one alpha 2(IV) chain. Type IV collagen forms a mesh-like network linked through intermolecular interactions between 7S domains and between NC1 domains. Prolines at the third position of the tripeptide repeating unit (G-X-Y) are hydroxylated in some or all of the chains. In terms of processing, type IV collagens contain numerous cysteine residues which are involved in inter- and intramolecular disulfide bonding. 12 of these, located in the NC1 domain, are conserved in all known type IV collagens. Post-translationally, the trimeric structure of the NC1 domains is stabilized by covalent bonds between Lys and Met residues. In terms of tissue distribution, localizes to the basement membrane between distal tip cells and the germline. Localizes to the intestinal basement membrane.

It is found in the secreted. The protein localises to the extracellular space. The protein resides in the extracellular matrix. Its subcellular location is the basement membrane. In terms of biological role, collagen type IV is specific for basement membranes. Together with fbl-1 and downstream of metalloprotease mig-17, recruits nidogen nid-1 to the gonad basement membrane thereby probably inducing basement membrane remodeling required for the directional migration of distal tip cells. Required to restrict presynaptic growth at the neuromuscular junctions in late larval stage and in adult motor neurons. Vital for embryonic development. This Caenorhabditis elegans protein is Collagen alpha-2(IV) chain.